Reading from the N-terminus, the 668-residue chain is Transketolase 2 (668 aa).

His26 contacts substrate. Residues His66 and 114–116 (GPL) contribute to the thiamine diphosphate site. Asp155 serves as a coordination point for Mg(2+). Thiamine diphosphate contacts are provided by Gly156 and Asn185. Mg(2+)-binding residues include Asn185 and Ile187. Residues His261, Arg358, and Ser385 each coordinate substrate. Residue His261 coordinates thiamine diphosphate. The active-site Proton donor is the Glu413. Thiamine diphosphate is bound at residue Phe439. Positions 463, 471, and 522 each coordinate substrate.

It belongs to the transketolase family. In terms of assembly, homodimer. The cofactor is Mg(2+). Ca(2+) serves as cofactor. It depends on Mn(2+) as a cofactor. Co(2+) is required as a cofactor. Requires thiamine diphosphate as cofactor.

The enzyme catalyses D-sedoheptulose 7-phosphate + D-glyceraldehyde 3-phosphate = aldehydo-D-ribose 5-phosphate + D-xylulose 5-phosphate. Functionally, catalyzes the transfer of a two-carbon ketol group from a ketose donor to an aldose acceptor, via a covalent intermediate with the cofactor thiamine pyrophosphate. The chain is Transketolase 2 (tktB) from Pasteurella multocida (strain Pm70).